We begin with the raw amino-acid sequence, 410 residues long: Chorismate synthase (410 aa).

Positions 40 and 46 each coordinate NADP(+). Residues 129 to 131 (RSS), 257 to 258 (QA), Gly302, 317 to 321 (KPISS), and Arg343 each bind FMN.

Belongs to the chorismate synthase family. Homotetramer. Requires FMNH2 as cofactor.

The catalysed reaction is 5-O-(1-carboxyvinyl)-3-phosphoshikimate = chorismate + phosphate. The protein operates within metabolic intermediate biosynthesis; chorismate biosynthesis; chorismate from D-erythrose 4-phosphate and phosphoenolpyruvate: step 7/7. In terms of biological role, catalyzes the anti-1,4-elimination of the C-3 phosphate and the C-6 proR hydrogen from 5-enolpyruvylshikimate-3-phosphate (EPSP) to yield chorismate, which is the branch point compound that serves as the starting substrate for the three terminal pathways of aromatic amino acid biosynthesis. This reaction introduces a second double bond into the aromatic ring system. In Chlorobaculum parvum (strain DSM 263 / NCIMB 8327) (Chlorobium vibrioforme subsp. thiosulfatophilum), this protein is Chorismate synthase.